The chain runs to 442 residues: Dihydrolipoyllysine-residue acetyltransferase component of pyruvate dehydrogenase complex (442 aa).

In terms of domain architecture, Lipoyl-binding spans 2–77; the sequence is AFEFKLPDIG…TVGQTIITFD (76 aa). K43 is subject to N6-lipoyllysine. Positions 84 to 97 are enriched in basic and acidic residues; sequence LQFKGSDESDDAKT. Positions 84 to 136 are disordered; it reads LQFKGSDESDDAKTEAQVQSTAEAGQDVAKEEQAQEPAKATGAGQQDQAEVDP. Residues 141–178 enclose the Peripheral subunit-binding (PSBD) domain; it reads IAMPSVRKYAREKGVDIRKVTGSGNNGRVVKEDIDSFV. Residues 182-208 are compositionally biased toward low complexity; the sequence is AQEAAPQETAAPQETAAKPAAAPAPEG. Residues 182–215 form a disordered region; the sequence is AQEAAPQETAAPQETAAKPAAAPAPEGEFPETRE. H413 is a catalytic residue.

This sequence belongs to the 2-oxoacid dehydrogenase family. Forms a 24-polypeptide structural core with octahedral symmetry. (R)-lipoate is required as a cofactor.

The enzyme catalyses N(6)-[(R)-dihydrolipoyl]-L-lysyl-[protein] + acetyl-CoA = N(6)-[(R)-S(8)-acetyldihydrolipoyl]-L-lysyl-[protein] + CoA. Functionally, the pyruvate dehydrogenase complex catalyzes the overall conversion of pyruvate to acetyl-CoA and CO(2). It contains multiple copies of three enzymatic components: pyruvate dehydrogenase (E1), dihydrolipoamide acetyltransferase (E2) and lipoamide dehydrogenase (E3). Its function is as follows. The B.subtilis PDH complex also possesses branched-chain 2-oxoacid dehydrogenase (BCDH) activity. The chain is Dihydrolipoyllysine-residue acetyltransferase component of pyruvate dehydrogenase complex (pdhC) from Bacillus subtilis (strain 168).